The chain runs to 493 residues: Cytochrome P450 2E1 (493 aa).

298-303 (FAGTET) contacts substrate. Cysteine 437 contributes to the heme binding site.

It belongs to the cytochrome P450 family. In terms of assembly, interacts with chaperones HSP70 and HSP90; this interaction is required for initial targeting to mitochondria. It depends on heme as a cofactor.

It is found in the endoplasmic reticulum membrane. The protein localises to the microsome membrane. The protein resides in the mitochondrion inner membrane. It catalyses the reaction an organic molecule + reduced [NADPH--hemoprotein reductase] + O2 = an alcohol + oxidized [NADPH--hemoprotein reductase] + H2O + H(+). The enzyme catalyses (5Z,8Z,11Z)-eicosatrienoate + reduced [NADPH--hemoprotein reductase] + O2 = 19-hydroxy-(5Z,8Z,11Z)-eicosatrienoate + oxidized [NADPH--hemoprotein reductase] + H2O + H(+). The catalysed reaction is (5Z,8Z,11Z,14Z,17Z)-eicosapentaenoate + reduced [NADPH--hemoprotein reductase] + O2 = 19-hydroxy-(5Z,8Z,11Z,14Z,17Z)-eicosapentaenoate + oxidized [NADPH--hemoprotein reductase] + H2O + H(+). It carries out the reaction (4Z,7Z,10Z,13Z,16Z,19Z)-docosahexaenoate + reduced [NADPH--hemoprotein reductase] + O2 = 21-hydroxy-(4Z,7Z,10Z,13Z,16Z,19Z)-docosahexaenoate + oxidized [NADPH--hemoprotein reductase] + H2O + H(+). It catalyses the reaction dodecanoate + reduced [NADPH--hemoprotein reductase] + O2 = 11-hydroxydodecanoate + oxidized [NADPH--hemoprotein reductase] + H2O + H(+). The enzyme catalyses tetradecanoate + reduced [NADPH--hemoprotein reductase] + O2 = 13-hydroxytetradecanoate + oxidized [NADPH--hemoprotein reductase] + H2O + H(+). The catalysed reaction is 4-nitrophenol + NADPH + O2 + H(+) = 4-nitrocatechol + NADP(+) + H2O. The protein operates within lipid metabolism; fatty acid metabolism. With respect to regulation, the omega-1 hydroxylase activity is stimulated by cytochrome b5. In terms of biological role, a cytochrome P450 monooxygenase involved in the metabolism of fatty acids. Mechanistically, uses molecular oxygen inserting one oxygen atom into a substrate, and reducing the second into a water molecule, with two electrons provided by NADPH via cytochrome P450 reductase (NADPH--hemoprotein reductase). Catalyzes the hydroxylation of carbon-hydrogen bonds. Hydroxylates fatty acids specifically at the omega-1 position displaying the highest catalytic activity for saturated fatty acids. May be involved in the oxidative metabolism of xenobiotics. This chain is Cytochrome P450 2E1 (CYP2E1), found in Mesocricetus auratus (Golden hamster).